A 125-amino-acid chain; its full sequence is L-fucose mutarotase (125 aa).

The Proton donor role is filled by His13.

The protein belongs to the RbsD / FucU family. FucU mutarotase subfamily.

It catalyses the reaction alpha-L-fucose = beta-L-fucose. With respect to regulation, active toward L-galactopyranoside and D-arabinopyranoside but no D-fucopyranoside activity detected. Plays a role in the catabolism of L-fucose. Involved in the anomeric conversion of L-fucose. In Xanthomonas campestris pv. campestris (strain ATCC 33913 / DSM 3586 / NCPPB 528 / LMG 568 / P 25), this protein is L-fucose mutarotase.